Here is a 137-residue protein sequence, read N- to C-terminus: Putative pre-16S rRNA nuclease (137 aa).

This sequence belongs to the YqgF nuclease family.

It is found in the cytoplasm. Functionally, could be a nuclease involved in processing of the 5'-end of pre-16S rRNA. The polypeptide is Putative pre-16S rRNA nuclease (Clostridium botulinum (strain 657 / Type Ba4)).